The sequence spans 431 residues: Adenylosuccinate synthetase (431 aa).

Residues Gly13 to Lys19 and Gly41 to Thr43 each bind GTP. Catalysis depends on Asp14, which acts as the Proton acceptor. Residues Asp14 and Gly41 each contribute to the Mg(2+) site. IMP contacts are provided by residues Asp14–Lys17, Asn39–His42, Thr130, Arg144, Gln225, Thr240, and Arg304. Catalysis depends on His42, which acts as the Proton donor. A substrate-binding site is contributed by Ser300–Arg306. GTP-binding positions include Arg306, Lys332–Asp334, and Ser414–Gly416.

The protein belongs to the adenylosuccinate synthetase family. Homodimer. The cofactor is Mg(2+).

It localises to the cytoplasm. The enzyme catalyses IMP + L-aspartate + GTP = N(6)-(1,2-dicarboxyethyl)-AMP + GDP + phosphate + 2 H(+). It participates in purine metabolism; AMP biosynthesis via de novo pathway; AMP from IMP: step 1/2. In terms of biological role, plays an important role in the de novo pathway of purine nucleotide biosynthesis. Catalyzes the first committed step in the biosynthesis of AMP from IMP. The sequence is that of Adenylosuccinate synthetase from Bordetella avium (strain 197N).